We begin with the raw amino-acid sequence, 412 residues long: Argininosuccinate synthase (412 aa).

ATP is bound by residues 10-18 and Ala-36; that span reads AYSGGLDTS. Residues Tyr-87 and Ser-92 each contribute to the L-citrulline site. At Tyr-87 the chain carries Phosphotyrosine. Position 112 is an N6-acetyllysine (Lys-112). Tyr-113 bears the Phosphotyrosine mark. Residue 115–123 coordinates ATP; sequence SHGATGKGN. The L-aspartate site is built by Thr-119, Asn-123, and Asp-124. Position 123 (Asn-123) interacts with L-citrulline. Arg-127 is an L-citrulline binding site. Residues Lys-165 and Lys-176 each carry the N6-acetyllysine; by CLOCK modification. Positions 180 and 189 each coordinate L-citrulline. Ser-180 carries the post-translational modification Phosphoserine. Position 219 is a phosphoserine (Ser-219). Residues Glu-270 and Tyr-282 each contribute to the L-citrulline site.

This sequence belongs to the argininosuccinate synthase family. Type 1 subfamily. In terms of assembly, homotetramer. Interacts with NMRAL1. Interacts with CLOCK; in a circadian manner. Forms tissue-specific complexes with ASL, SLC7A1, HSP90AA1 and nitric oxide synthase NOS1, NOS2 or NOS3; the complex regulates cell-autonomous L-arginine synthesis and citrulline recycling while channeling extracellular L-arginine to nitric oxide synthesis pathway. Acetylated by CLOCK in a circadian manner which negatively regulates its enzyme activity. Deacetylated by histone deacetylases.

It is found in the cytoplasm. Its subcellular location is the cytosol. It carries out the reaction L-citrulline + L-aspartate + ATP = 2-(N(omega)-L-arginino)succinate + AMP + diphosphate + H(+). It participates in amino-acid biosynthesis; L-arginine biosynthesis; L-arginine from L-ornithine and carbamoyl phosphate: step 2/3. The protein operates within nitrogen metabolism; urea cycle; (N(omega)-L-arginino)succinate from L-aspartate and L-citrulline: step 1/1. In terms of biological role, one of the enzymes of the urea cycle, the metabolic pathway transforming neurotoxic amonia produced by protein catabolism into inocuous urea in the liver of ureotelic animals. Catalyzes the formation of arginosuccinate from aspartate, citrulline and ATP and together with ASL it is responsible for the biosynthesis of arginine in most body tissues. The polypeptide is Argininosuccinate synthase (Bos taurus (Bovine)).